Reading from the N-terminus, the 335-residue chain is Fructose-1,6-bisphosphatase class 1 (335 aa).

Mg(2+) is bound by residues Glu94, Asp113, Leu115, and Asp116. Residues 116–119 (DGSS), Asn208, and Lys274 contribute to the substrate site. A Mg(2+)-binding site is contributed by Glu280.

This sequence belongs to the FBPase class 1 family. Homotetramer. The cofactor is Mg(2+).

It localises to the cytoplasm. The enzyme catalyses beta-D-fructose 1,6-bisphosphate + H2O = beta-D-fructose 6-phosphate + phosphate. It functions in the pathway carbohydrate biosynthesis; gluconeogenesis. This Polynucleobacter asymbioticus (strain DSM 18221 / CIP 109841 / QLW-P1DMWA-1) (Polynucleobacter necessarius subsp. asymbioticus) protein is Fructose-1,6-bisphosphatase class 1.